The primary structure comprises 896 residues: Phosphatidate phosphatase LPIN2 (896 aa).

The tract at residues M1–I108 is N-LIP. Phosphoserine is present on S106. The tract at residues T120–E208 is disordered. Positions V152–Y162 are enriched in basic residues. Residues K153–R158 carry the Nuclear localization signal motif. 5 positions are modified to phosphoserine: S174, S186, S187, S243, and S303. Disordered stretches follow at residues A370 to L405 and F420 to L459. Residues K387–Q396 are compositionally biased toward basic residues. Residues E426–G448 show a composition bias toward polar residues. S566 is subject to Phosphoserine. Over residues K569–S579 the composition is skewed to basic and acidic residues. The segment at K569–K636 is disordered. Over residues S604–I617 the composition is skewed to acidic residues. The C-LIP stretch occupies residues Y635–E837. The short motif at D689–T693 is the DXDXT motif element. The LXXIL motif motif lies at L700–L704.

This sequence belongs to the lipin family. It depends on Mg(2+) as a cofactor. Expressed in liver, lung, kidney, placenta, spleen, thymus, lymph node, prostate, testes, small intestine, and colon.

Its subcellular location is the nucleus. The protein localises to the cytoplasm. The protein resides in the cytosol. It is found in the endoplasmic reticulum membrane. The enzyme catalyses a 1,2-diacyl-sn-glycero-3-phosphate + H2O = a 1,2-diacyl-sn-glycerol + phosphate. With respect to regulation, inhibited by N-ethylmaleimide. Its function is as follows. Acts as a magnesium-dependent phosphatidate phosphatase enzyme which catalyzes the conversion of phosphatidic acid to diacylglycerol during triglyceride, phosphatidylcholine and phosphatidylethanolamine biosynthesis in the endoplasmic reticulum membrane. Plays important roles in controlling the metabolism of fatty acids at different levels. Also acts as a nuclear transcriptional coactivator for PPARGC1A to modulate lipid metabolism. In Homo sapiens (Human), this protein is Phosphatidate phosphatase LPIN2.